Consider the following 188-residue polypeptide: dCTP deaminase (188 aa).

DCTP contacts are provided by residues 111 to 116 (KSTYAR), 135 to 137 (TLE), Q156, Y170, and Q180. The Proton donor/acceptor role is filled by E137.

It belongs to the dCTP deaminase family. In terms of assembly, homotrimer.

The enzyme catalyses dCTP + H2O + H(+) = dUTP + NH4(+). The protein operates within pyrimidine metabolism; dUMP biosynthesis; dUMP from dCTP (dUTP route): step 1/2. Its function is as follows. Catalyzes the deamination of dCTP to dUTP. In Pseudomonas aeruginosa (strain UCBPP-PA14), this protein is dCTP deaminase.